The following is a 288-amino-acid chain: Prohibitin-1, mitochondrial (288 aa).

Over 1–10 (MNNVKVPKIP) the chain is Mitochondrial matrix. The helical; Signal-anchor for type II membrane protein transmembrane segment at 11 to 30 (GGGAISTLLKVGIIGGLGLY) threads the bilayer. Residues 31–288 (GATHSLYNVE…GMNLDVDAKN (258 aa)) are Mitochondrial intermembrane-facing. Residues 186–219 (KEFTAAIEAKQVAAQEAERAKFIVEKAEQDKRSA) are a coiled coil.

Belongs to the prohibitin family. In terms of assembly, component of a prohibitin multimeric complex in mitochondrial membranes. As to expression, mostly expressed in proliferative tissues, including vasculature, shoot and root apical tissues.

Its subcellular location is the mitochondrion inner membrane. In terms of biological role, prohibitin probably acts as a holdase/unfoldase for the stabilization of newly synthesized mitochondrial proteins. In Arabidopsis thaliana (Mouse-ear cress), this protein is Prohibitin-1, mitochondrial (PHB1).